The primary structure comprises 298 residues: Protein transport protein SEC13-1 (298 aa).

WD repeat units follow at residues 7–46 (AHND…HKLV), 51–92 (GHEG…WSQI), 97–138 (VHTA…TATP), 143–196 (AHAI…QSYL), 203–245 (GHSD…GPWV), and 253–292 (EFPD…KWES).

This sequence belongs to the WD repeat SEC13 family. The COPII coat is composed of at least 5 proteins: the SEC23/24 complex, the SEC13/31 complex, and the protein SAR1. Component of the nuclear pore complex (NPC). NPC constitutes the exclusive means of nucleocytoplasmic transport. NPCs allow the passive diffusion of ions and small molecules and the active, nuclear transport receptor-mediated bidirectional transport of macromolecules such as proteins, RNAs, ribonucleoparticles (RNPs), and ribosomal subunits across the nuclear envelope. Due to its 8-fold rotational symmetry, all subunits are present with 8 copies or multiples thereof.

Its subcellular location is the cytoplasmic vesicle. The protein resides in the COPII-coated vesicle membrane. It is found in the endoplasmic reticulum membrane. It localises to the nucleus. The protein localises to the nuclear pore complex. Functionally, component of the coat protein complex II (COPII) which promotes the formation of transport vesicles from the endoplasmic reticulum (ER). The coat has two main functions, the physical deformation of the endoplasmic reticulum membrane into vesicles and the selection of cargo molecules. It also functions as a component of the nuclear pore complex (NPC). NPC components, collectively referred to as nucleoporins (NUPs), can play the role of both NPC structural components and of docking or interaction partners for transiently associated nuclear transport factors. SEC13 is required for efficient mRNA export from the nucleus to the cytoplasm and for correct nuclear pore biogenesis and distribution. This is Protein transport protein SEC13-1 (SEC131) from Candida glabrata (strain ATCC 2001 / BCRC 20586 / JCM 3761 / NBRC 0622 / NRRL Y-65 / CBS 138) (Yeast).